The primary structure comprises 320 residues: Bifunctional protein FolD 2 (320 aa).

Residues 173–175 and isoleucine 242 contribute to the NADP(+) site; that span reads GRS.

It belongs to the tetrahydrofolate dehydrogenase/cyclohydrolase family. Homodimer.

It carries out the reaction (6R)-5,10-methylene-5,6,7,8-tetrahydrofolate + NADP(+) = (6R)-5,10-methenyltetrahydrofolate + NADPH. The enzyme catalyses (6R)-5,10-methenyltetrahydrofolate + H2O = (6R)-10-formyltetrahydrofolate + H(+). It functions in the pathway one-carbon metabolism; tetrahydrofolate interconversion. Its function is as follows. Catalyzes the oxidation of 5,10-methylenetetrahydrofolate to 5,10-methenyltetrahydrofolate and then the hydrolysis of 5,10-methenyltetrahydrofolate to 10-formyltetrahydrofolate. The chain is Bifunctional protein FolD 2 from Rubrobacter xylanophilus (strain DSM 9941 / JCM 11954 / NBRC 16129 / PRD-1).